We begin with the raw amino-acid sequence, 205 residues long: MIAKICGLQSVEAAQQAVDNGADLIGVICVPNRKRTVDPEIARSISKICHGTGTRLVGVFRNQPKEEVRQLAQEYELDVVQLHGDEDWQEYASYVGLPLLKRVVFPRDVSLVSQMDGEVCTPLFDSEAGGSGEKLDWQAIGSWFQDSQLTRGYLLAGGLSPDNVVEALRVPGVVGVDVSGGVETDGTKDLAKIKQFLELYKVNVN.

It belongs to the TrpF family.

It catalyses the reaction N-(5-phospho-beta-D-ribosyl)anthranilate = 1-(2-carboxyphenylamino)-1-deoxy-D-ribulose 5-phosphate. It functions in the pathway amino-acid biosynthesis; L-tryptophan biosynthesis; L-tryptophan from chorismate: step 3/5. The chain is N-(5'-phosphoribosyl)anthranilate isomerase (TRP1) from Zygosaccharomyces bailii.